Reading from the N-terminus, the 128-residue chain is Small ribosomal subunit protein uS8c (128 aa).

It belongs to the universal ribosomal protein uS8 family. In terms of assembly, part of the 30S ribosomal subunit.

It is found in the plastid. The protein resides in the chloroplast. In terms of biological role, one of the primary rRNA binding proteins, it binds directly to 16S rRNA central domain where it helps coordinate assembly of the platform of the 30S subunit. The sequence is that of Small ribosomal subunit protein uS8c (rps8) from Gnetum parvifolium (Small-leaved jointfir).